The sequence spans 389 residues: Na(+)/H(+) antiporter NhaA (389 aa).

11 helical membrane passes run 14–34, 59–79, 95–115, 124–144, 154–174, 177–197, 213–233, 257–277, 292–312, 328–348, and 363–383; these read AGGI…NSPL, LILW…GLEV, SLPT…YLLF, AGWA…MALL, VFLL…IALF, TDLS…LVGL, LILW…GVII, PWST…VYVG, IALG…YIAV, IAPV…IASL, and LGTL…LSKV.

Belongs to the NhaA Na(+)/H(+) (TC 2.A.33) antiporter family.

It localises to the cell inner membrane. It carries out the reaction Na(+)(in) + 2 H(+)(out) = Na(+)(out) + 2 H(+)(in). Its function is as follows. Na(+)/H(+) antiporter that extrudes sodium in exchange for external protons. The protein is Na(+)/H(+) antiporter NhaA of Shewanella baltica (strain OS195).